Reading from the N-terminus, the 229-residue chain is uncharacterized protein (229 aa).

The next 7 helical transmembrane spans lie at 21–41 (IYSLVGMGVGLSAFVSYLMLY), 56–76 (MIYYGAAIIELILVFVASSAA), 83–103 (ALPIFLIYSALNGFTLSFIIV), 109–129 (TVFQAFLSSAAVFFAMSIIGV), 141–161 (AMFAALIGVVVASLINLFIGS), 162–182 (GMMSYVISVISVLIFSGLIAS), and 202–222 (WAVAMALSLYLDFINLFISLL).

It belongs to the BI1 family.

It is found in the cell membrane. This is an uncharacterized protein from Streptococcus pyogenes serotype M1.